Reading from the N-terminus, the 64-residue chain is Alpha-like toxin BmK M2 (64 aa).

The LCN-type CS-alpha/beta domain maps to 2–64 (RDAYIAKPHN…VPIRVPGKCH (63 aa)). 4 cysteine pairs are disulfide-bonded: cysteine 12-cysteine 63, cysteine 16-cysteine 36, cysteine 22-cysteine 46, and cysteine 26-cysteine 48.

The protein belongs to the long (4 C-C) scorpion toxin superfamily. Sodium channel inhibitor family. Alpha subfamily. Expressed by the venom gland.

It localises to the secreted. Its function is as follows. Alpha toxins bind voltage-independently at site-3 of sodium channels (Nav) and inhibit the inactivation of the activated channels, thereby blocking neuronal transmission. This toxin is active against both mammals and insects, and is classified as an alpha-like toxin. In Olivierus martensii (Manchurian scorpion), this protein is Alpha-like toxin BmK M2.